Here is a 403-residue protein sequence, read N- to C-terminus: MSGRVGDLSPKQKEALAKFRENVQDVLPALPNPDDYFLLRWLRARNFNLQKSEAMLRKHVEFRKQKDIDNIMSWQPPEVVQQYLSGGMCGYDLEGSPIWYDIIGPLDAKGLLLSASKQDLFKTKMRDCELLLQECVRQTEKMGKKIEATTLIYDCEGLGLKHLWKPAVEAYGEFLCMFEENYPETLKRLFIVKAPKLFPVAYNLVKPFLSEDTRKKIQVLGANWKEVLLKYISPDQLPVEYGGTMTDPDGNPKCKSKINYGGDIPKKYYVRDQVKQQYEHSVQISRGSSHQVEYEILFPGCVLRWQFMSDGSDIGFGIFLKTKVGERQRAGEMREVLPSQRYNAHLVPEDGSLTCSDPGIYVLRFDNTYSFIHAKKVSFTVEVLLPDKALEEKMQQLGAVTPK.

Residues K11 and K51 each carry the N6-succinyllysine modification. The CRAL-TRIO domain maps to 76–249 (PPEVVQQYLS…EYGGTMTDPD (174 aa)). 2 positions are modified to N6-succinyllysine: K253 and K257. A GOLD domain is found at 275–383 (KQQYEHSVQI…AKKVSFTVEV (109 aa)). Position 393 is an N6-succinyllysine (K393).

As to quaternary structure, monomer. Post-translationally, the N-terminus is blocked.

Its subcellular location is the cytoplasm. It is found in the nucleus. Carrier protein. Binds to some hydrophobic molecules and promotes their transfer between the different cellular sites. Binds with high affinity to alpha-tocopherol. Also binds with a weaker affinity to other tocopherols and to tocotrienols. May have a transcriptional activatory activity via its association with alpha-tocopherol. Probably recognizes and binds some squalene structure, suggesting that it may regulate cholesterol biosynthesis by increasing the transfer of squalene to a metabolic active pool in the cell. The polypeptide is SEC14-like protein 2 (SEC14L2) (Bos taurus (Bovine)).